Consider the following 548-residue polypeptide: 5-aminolevulinate synthase, mitochondrial (548 aa).

A mitochondrion-targeting transit peptide spans 1-22 (MQRSIFARFGNSSAAVSTLNRL). Substrate contacts are provided by Arg-91, Ser-204, and Lys-223. Ser-256, His-284, and Thr-334 together coordinate pyridoxal 5'-phosphate. Lys-337 is a catalytic residue. N6-(pyridoxal phosphate)lysine is present on Lys-337. Pyridoxal 5'-phosphate-binding residues include Thr-366 and Thr-367. Substrate is bound at residue Thr-452.

This sequence belongs to the class-II pyridoxal-phosphate-dependent aminotransferase family. As to quaternary structure, homodimer. Interacts with MCX1. Pyridoxal 5'-phosphate serves as cofactor.

It localises to the mitochondrion matrix. It catalyses the reaction succinyl-CoA + glycine + H(+) = 5-aminolevulinate + CO2 + CoA. It functions in the pathway porphyrin-containing compound metabolism; protoporphyrin-IX biosynthesis; 5-aminolevulinate from glycine: step 1/1. With respect to regulation, ihnhibited by hemin. In terms of biological role, catalyzes the synthesis of 5-aminolevulinate (ALA) from succinyl-CoA and glycine, the first and rate-limiting step in heme biosynthesis. The polypeptide is 5-aminolevulinate synthase, mitochondrial (Saccharomyces cerevisiae (strain ATCC 204508 / S288c) (Baker's yeast)).